The primary structure comprises 889 residues: DNA gyrase subunit A (889 aa).

Positions 35–501 constitute a Topo IIA-type catalytic domain; it reads LPDVRDGLKP…GFEDLEDEDL (467 aa). Y123 (O-(5'-phospho-DNA)-tyrosine intermediate) is an active-site residue. The GyrA-box signature appears at 528–534; it reads QNRGGRG. The segment at 810-889 is disordered; the sequence is VKEDAEDETN…IQQSSDEDEE (80 aa). The segment covering 813–823 has biased composition (acidic residues); sequence DAEDETNEDEQ. Residues 863–875 show a composition bias toward basic and acidic residues; that stretch reads DGRIEVRQDFMDR. Residues 876–889 are compositionally biased toward acidic residues; the sequence is VEEDIQQSSDEDEE.

This sequence belongs to the type II topoisomerase GyrA/ParC subunit family. As to quaternary structure, heterotetramer, composed of two GyrA and two GyrB chains. In the heterotetramer, GyrA contains the active site tyrosine that forms a transient covalent intermediate with DNA, while GyrB binds cofactors and catalyzes ATP hydrolysis.

It localises to the cytoplasm. It catalyses the reaction ATP-dependent breakage, passage and rejoining of double-stranded DNA.. Functionally, a type II topoisomerase that negatively supercoils closed circular double-stranded (ds) DNA in an ATP-dependent manner to modulate DNA topology and maintain chromosomes in an underwound state. Negative supercoiling favors strand separation, and DNA replication, transcription, recombination and repair, all of which involve strand separation. Also able to catalyze the interconversion of other topological isomers of dsDNA rings, including catenanes and knotted rings. Type II topoisomerases break and join 2 DNA strands simultaneously in an ATP-dependent manner. This Staphylococcus aureus (strain N315) protein is DNA gyrase subunit A.